The following is a 61-amino-acid chain: MRKCISICFYEEENDNEDFEEEVELSREDLNQIINELAPFLIKLLTDLTELTQKKEESENE.

The stretch at 10 to 61 forms a coiled coil; that stretch reads YEEENDNEDFEEEVELSREDLNQIINELAPFLIKLLTDLTELTQKKEESENE.

This is an uncharacterized protein from Acidianus bottle-shaped virus (isolate Italy/Pozzuoli) (ABV).